Consider the following 432-residue polypeptide: Glutamate-1-semialdehyde 2,1-aminomutase 2 (432 aa).

N6-(pyridoxal phosphate)lysine is present on K268.

This sequence belongs to the class-III pyridoxal-phosphate-dependent aminotransferase family. HemL subfamily. Homodimer. Pyridoxal 5'-phosphate is required as a cofactor.

Its subcellular location is the cytoplasm. The enzyme catalyses (S)-4-amino-5-oxopentanoate = 5-aminolevulinate. It participates in porphyrin-containing compound metabolism; protoporphyrin-IX biosynthesis; 5-aminolevulinate from L-glutamyl-tRNA(Glu): step 2/2. In Listeria monocytogenes serotype 4b (strain CLIP80459), this protein is Glutamate-1-semialdehyde 2,1-aminomutase 2.